The following is a 1303-amino-acid chain: Ninein-like protein (1303 aa).

EF-hand domains follow at residues 8–43 (RYVA…LSLD) and 61–77 (RVNF…VLSR). Positions 107–135 (TKRYGRRSRPDKTDLELTADSDSLPFGTD) are disordered. EF-hand domains are found at residues 203–238 (VTDG…IGLK) and 240–275 (LEAE…PHDH). Ca(2+) contacts are provided by aspartate 253, aspartate 255, aspartate 257, lysine 259, and glutamate 264. A coiled-coil region spans residues 464 to 590 (EYESEVLLEQ…CSELELLKSQ (127 aa)). The segment covering 592 to 617 (SGKRTRLSRSSLPANDWSNRRALTTE) has biased composition (polar residues). A disordered region spans residues 592-634 (SGKRTRLSRSSLPANDWSNRRALTTESDSDDPEMKKGTSPQVR). Coiled coils occupy residues 660–791 (ELAM…LEAE), 821–876 (LAVL…LSAR), and 919–1146 (SKQL…VQAQ). A disordered region spans residues 1156-1181 (EQMGSGTQEHASHLQTQLAEQQRRTQ). Over residues 1159–1175 (GSGTQEHASHLQTQLAE) the composition is skewed to polar residues. Residues 1202-1278 (QEQYEKLMAS…EQRQKSAEKK (77 aa)) are a coiled coil.

The protein resides in the cytoplasm. It localises to the cytoskeleton. Its subcellular location is the microtubule organizing center. It is found in the centrosome. Its function is as follows. Required for the intracellular transport of organelles and vesicles, and is essential for the photoreceptor's outer segments formation, maintenance and function. The polypeptide is Ninein-like protein (Ninl) (Danio rerio (Zebrafish)).